Here is a 463-residue protein sequence, read N- to C-terminus: Siroheme synthase (463 aa).

The segment at 1 to 203 (MDYLPLFHKL…GQGAEAERLL (203 aa)) is precorrin-2 dehydrogenase /sirohydrochlorin ferrochelatase. NAD(+)-binding positions include 22-23 (EI) and 43-44 (PE). At S128 the chain carries Phosphoserine. The uroporphyrinogen-III C-methyltransferase stretch occupies residues 216-463 (GEVYLVGAGP…LAWFEGAQNS (248 aa)). Residue P225 coordinates S-adenosyl-L-methionine. D248 functions as the Proton acceptor in the catalytic mechanism. Residue K270 is the Proton donor of the active site. S-adenosyl-L-methionine is bound by residues 301 to 303 (GGD), I306, 331 to 332 (TA), M383, and G412.

This sequence in the N-terminal section; belongs to the precorrin-2 dehydrogenase / sirohydrochlorin ferrochelatase family. The protein in the C-terminal section; belongs to the precorrin methyltransferase family.

The enzyme catalyses uroporphyrinogen III + 2 S-adenosyl-L-methionine = precorrin-2 + 2 S-adenosyl-L-homocysteine + H(+). It catalyses the reaction precorrin-2 + NAD(+) = sirohydrochlorin + NADH + 2 H(+). The catalysed reaction is siroheme + 2 H(+) = sirohydrochlorin + Fe(2+). It functions in the pathway cofactor biosynthesis; adenosylcobalamin biosynthesis; precorrin-2 from uroporphyrinogen III: step 1/1. Its pathway is cofactor biosynthesis; adenosylcobalamin biosynthesis; sirohydrochlorin from precorrin-2: step 1/1. The protein operates within porphyrin-containing compound metabolism; siroheme biosynthesis; precorrin-2 from uroporphyrinogen III: step 1/1. It participates in porphyrin-containing compound metabolism; siroheme biosynthesis; siroheme from sirohydrochlorin: step 1/1. It functions in the pathway porphyrin-containing compound metabolism; siroheme biosynthesis; sirohydrochlorin from precorrin-2: step 1/1. Multifunctional enzyme that catalyzes the SAM-dependent methylations of uroporphyrinogen III at position C-2 and C-7 to form precorrin-2 via precorrin-1. Then it catalyzes the NAD-dependent ring dehydrogenation of precorrin-2 to yield sirohydrochlorin. Finally, it catalyzes the ferrochelation of sirohydrochlorin to yield siroheme. In Pseudomonas entomophila (strain L48), this protein is Siroheme synthase.